Here is a 312-residue protein sequence, read N- to C-terminus: Signal peptidase I (312 aa).

A helical transmembrane segment spans residues 7–27 (IFLLTSTFFTGILWIIDHILL). Residues 28–63 (IKNYFYNKKKTKNNNTILINKVILENKKCFFRSLSS) lie on the Cytoplasmic side of the membrane. The chain crosses the membrane as a helical span at residues 64–84 (LFPTFFIVFIIRSFIYEPFQI). Over 85 to 312 (PSGSMMPTLL…IRIKRIGNIY (228 aa)) the chain is Extracellular. Catalysis depends on residues Ser88 and Lys142.

The protein belongs to the peptidase S26 family.

Its subcellular location is the cell membrane. It carries out the reaction Cleavage of hydrophobic, N-terminal signal or leader sequences from secreted and periplasmic proteins.. The chain is Signal peptidase I (lepB) from Buchnera aphidicola subsp. Schizaphis graminum (strain Sg).